The sequence spans 233 residues: N-(5'-phosphoribosyl)anthranilate isomerase (233 aa).

It belongs to the TrpF family.

It carries out the reaction N-(5-phospho-beta-D-ribosyl)anthranilate = 1-(2-carboxyphenylamino)-1-deoxy-D-ribulose 5-phosphate. Its pathway is amino-acid biosynthesis; L-tryptophan biosynthesis; L-tryptophan from chorismate: step 3/5. The sequence is that of N-(5'-phosphoribosyl)anthranilate isomerase from Synechococcus sp. (strain JA-2-3B'a(2-13)) (Cyanobacteria bacterium Yellowstone B-Prime).